The primary structure comprises 83 residues: Cell division topological specificity factor (83 aa).

The protein belongs to the MinE family.

Prevents the cell division inhibition by proteins MinC and MinD at internal division sites while permitting inhibition at polar sites. This ensures cell division at the proper site by restricting the formation of a division septum at the midpoint of the long axis of the cell. This chain is Cell division topological specificity factor, found in Buchnera aphidicola subsp. Baizongia pistaciae (strain Bp).